The following is a 1240-amino-acid chain: MGTIGVPLTAHCVVLFLLQMVALSTEQFTVNGLESPVLVPLGGNLELSCQLSPPQQAKHMEIRWFKNRYSEPVYLYRNGKDLNEAIVYKYVERTELLKDDIGKGKVTLRIFKVTSVDSGSYHCFFKDDKFYEEHIIEVKVTATSSDIQILMHPPNSTGVRLECHSGGWFPQPHMEWRDSKGEYIPATSKSHSQDENEFFNMTMDLFIKSNSYWSAACYIQNFVTHQEESISFVLPGTKVLLLKNIQSIFQSSSVDLEKKDMLLKSIKSRFQSSSVDPEKKERLLKIIQSRIESSSVDQETKALLLESIQSSIENSTVDLETKVWLLESIKSSIQNSSVDPETKELLLERIKSSIENSTVDLGTKEWLLESIQSSIQSSSVDLGTKKMLLKIIQSSIQSFSVYIGTKEWLLERVQSSIQSSSVDLGTKELLLEIIQSSIEGYSVELGIEELLSKIILSSIQSSRVDLGIKELLVKICQSSIQSTSVILETKEWLVKIFQSNIQSSSMDLETKVWLVKFFQSSIQSSSMDLGTIKWLVKNVQSNIQSSRVDLETKRMLLEIIQSSIQNSSVHRGTKKMLLKVIQSSIQSFSVDLETKEWLLKIIQSSIQSSSVDIGTKSMLLKKIGLILRSSIVNPGTELLFQIIQSDLQSSSVNTETREMLFEITQPTVQSSSVNSVTEELLEENYQLLLQSSSVNLEAENILNDTTQRILQLSSVNQGREKLLLDRIQQILQSSSVNPETKCWLLKRIQFILENPSVHQEKKDLLLERIHLILQSSSVQKETKSLLLGSIQSILHSFSVQKETKYLLLEKIQLILQNSSVHQETKDLLLKIIQLILQYSSVHEATSKLLLERIQLILQSSSVQKETKDLLLNRIFSILQNSCVDQGVKYFLLNIIHPILQKTSVHQETKSMLLDRIELILQSSSMQQETKNHLLDQIEQILQDTTVHQETKDLLLNRIELILQNSSVQQETKELLMDKIDSILRYTWVHQETKDLLLNRIELILQSSSVQEETKNFLCNIIASILQSTSMHQEKKKLLLGRIELILQSSSVQQETKKLLLKIVQSSSPSSSVRLESCNKRNPFWKKHALDLGISVFAIIVVTLIRHLNQREADQHFELDTLWSKDTSVILCVLIMFNNRLKALIYFRLYGYSPPGKTYKYIVNYILRFSQPLFFIVYSAIILVMHLQIQNTDSLFSLYNSWMVEMIMVLGLLLAIFNVKNIATALLHLGRTTLRLFRIKD.

The first 24 residues, 1–24 (MGTIGVPLTAHCVVLFLLQMVALS), serve as a signal peptide directing secretion. The Extracellular portion of the chain corresponds to 25–1086 (TEQFTVNGLE…CNKRNPFWKK (1062 aa)). The region spanning 26 to 141 (EQFTVNGLES…EEHIIEVKVT (116 aa)) is the Ig-like V-type domain. A disulfide bond links Cys-49 and Cys-123. Residues 142 to 231 (ATSSDIQILM…FVTHQEESIS (90 aa)) form the Ig-like C1-type domain. N-linked (GlcNAc...) asparagine glycosylation is found at Asn-155, Asn-200, and Asn-314. Cys-163 and Cys-217 are joined by a disulfide. Residues 1087-1107 (HALDLGISVFAIIVVTLIRHL) traverse the membrane as a helical segment. Residues 1108–1125 (NQREADQHFELDTLWSKD) are Cytoplasmic-facing. A helical transmembrane segment spans residues 1126–1146 (TSVILCVLIMFNNRLKALIYF). The Extracellular portion of the chain corresponds to 1147 to 1167 (RLYGYSPPGKTYKYIVNYILR). Residues 1168 to 1188 (FSQPLFFIVYSAIILVMHLQI) form a helical membrane-spanning segment. The Cytoplasmic portion of the chain corresponds to 1189 to 1205 (QNTDSLFSLYNSWMVEM). The chain crosses the membrane as a helical span at residues 1206–1226 (IMVLGLLLAIFNVKNIATALL). Residues 1227–1240 (HLGRTTLRLFRIKD) lie on the Extracellular side of the membrane.

The protein belongs to the SKINT family. Expressed in skin.

The protein localises to the membrane. May act by engaging a cell surface molecule on immature T-cells in the embryonic thymus. This chain is Selection and upkeep of intraepithelial T-cells protein 6 (Skint6), found in Mus musculus (Mouse).